A 190-amino-acid chain; its full sequence is Small ribosomal subunit protein uS5 (190 aa).

Residues 22–85 (FVDKLVHINR…ESAKRNLTRV (64 aa)) form the S5 DRBM domain.

It belongs to the universal ribosomal protein uS5 family. Part of the 30S ribosomal subunit. Contacts proteins S4 and S8.

In terms of biological role, with S4 and S12 plays an important role in translational accuracy. Located at the back of the 30S subunit body where it stabilizes the conformation of the head with respect to the body. This Rhodopseudomonas palustris (strain BisB18) protein is Small ribosomal subunit protein uS5.